The chain runs to 266 residues: 2-hydroxyisocaproyl-CoA dehydratase activator (266 aa).

Residues 10 to 14 (STASK) and 102 to 104 (GQD) contribute to the ATP site. [4Fe-4S] cluster is bound at residue Cys-125. Asp-134 provides a ligand contact to ATP. Position 164 (Cys-164) interacts with [4Fe-4S] cluster. Residues Gly-215 and Gln-241 each contribute to the ATP site.

Belongs to the HadI activator family. Homodimer. [4Fe-4S] cluster is required as a cofactor.

Involved in the reductive branch of L-leucine fermentation. Required for the activation of (R)-2-hydroxyisocaproyl-CoA dehydratase. The reduced activator transfers one electron to the dehydratase concomitant with hydrolysis of ATP. This protein is extremely sensitive towards oxygen. In Clostridioides difficile (Peptoclostridium difficile), this protein is 2-hydroxyisocaproyl-CoA dehydratase activator.